Here is a 155-residue protein sequence, read N- to C-terminus: 3-hydroxyacyl-[acyl-carrier-protein] dehydratase FabZ (155 aa).

His57 is an active-site residue.

Belongs to the thioester dehydratase family. FabZ subfamily.

The protein resides in the cytoplasm. The catalysed reaction is a (3R)-hydroxyacyl-[ACP] = a (2E)-enoyl-[ACP] + H2O. Involved in unsaturated fatty acids biosynthesis. Catalyzes the dehydration of short chain beta-hydroxyacyl-ACPs and long chain saturated and unsaturated beta-hydroxyacyl-ACPs. The sequence is that of 3-hydroxyacyl-[acyl-carrier-protein] dehydratase FabZ from Cereibacter sphaeroides (strain ATCC 17025 / ATH 2.4.3) (Rhodobacter sphaeroides).